A 260-amino-acid polypeptide reads, in one-letter code: FAS1 domain-containing protein SELMODRAFT_448915 (260 aa).

At 1 to 35 (MRRTGRSYKPLLSQLKDHHIPVHPSSRAERAMESR) the chain is on the cytoplasmic side. The chain crosses the membrane as a helical span at residues 36–58 (TLLVLLFVGVVTIVSSGLERAAA). One can recognise an FAS1 domain in the interval 59 to 198 (QDDTDDGILP…IACHGIDRVL (140 aa)). At 59 to 260 (QDDTDDGILP…SSASRYPVSE (202 aa)) the chain is on the extracellular side. 6 N-linked (GlcNAc...) asparagine glycosylation sites follow: N118, N169, N176, N201, N236, and N247. A disordered region spans residues 210 to 260 (PEASPPFGAEQASPAPEALPPGTRSPNNTANPSNRKSNSTRSSASRYPVSE). Residues 233-254 (RSPNNTANPSNRKSNSTRSSAS) are compositionally biased toward polar residues.

It is found in the membrane. The polypeptide is FAS1 domain-containing protein SELMODRAFT_448915 (Selaginella moellendorffii (Spikemoss)).